We begin with the raw amino-acid sequence, 24 residues long: MFHVLTLTYLCPLDVVXQTRPAHV.

The chain is 12 kDa protein from Mycolicibacterium smegmatis (Mycobacterium smegmatis).